The following is a 561-amino-acid chain: Sesquiterpene synthase TPS2 (561 aa).

The interval 6–26 (ANGHSDVPSTQPPIGKQKKEI) is disordered. The (2E,6E)-farnesyl diphosphate site is built by Arg-277, Asp-314, Asp-318, Arg-455, and Asp-458. Mg(2+)-binding residues include Asp-314 and Asp-318. The short motif at 314–318 (DDTYD) is the DDXXD motif element. The Mg(2+) site is built by Asp-458, Ser-462, and Glu-466.

The protein belongs to the terpene synthase family. Tpsa subfamily. Monomer. It depends on Mg(2+) as a cofactor.

It is found in the cytoplasm. The enzyme catalyses (2E,6E)-farnesyl diphosphate = beta-ylangene + diphosphate. It catalyses the reaction (2E,6E)-farnesyl diphosphate = beta-copaene + diphosphate. The catalysed reaction is (2E,6E)-farnesyl diphosphate = beta-cubebene + diphosphate. The protein operates within secondary metabolite biosynthesis; terpenoid biosynthesis. Its function is as follows. Sesquiterpene synthase involved in the biosynthesis of volatile organic compounds. Mediates the conversion of (2E,6E)-farnesyl diphosphate (FPP) into beta-ylangene, beta-copaene and beta-cubebene. Does not use (2E)-geranyl diphosphate (GPP) as substrate. The protein is Sesquiterpene synthase TPS2 of Cananga odorata (Ylang-ylang tree).